Reading from the N-terminus, the 100-residue chain is UPF0251 protein VVA1436 (100 aa).

It belongs to the UPF0251 family.

The protein is UPF0251 protein VVA1436 of Vibrio vulnificus (strain YJ016).